The chain runs to 288 residues: uncharacterized protein (288 aa).

The HTH lysR-type domain maps to methionine 1–threonine 59. The H-T-H motif DNA-binding region spans phenylalanine 19 to serine 38.

Belongs to the LysR transcriptional regulatory family.

This is an uncharacterized protein from Haemophilus influenzae (strain ATCC 51907 / DSM 11121 / KW20 / Rd).